We begin with the raw amino-acid sequence, 300 residues long: UDP-N-acetylenolpyruvoylglucosamine reductase (300 aa).

An FAD-binding PCMH-type domain is found at 30-194; the sequence is KVGGAADFFV…VGATFRLDPA (165 aa). The active site involves Arg-174. The active-site Proton donor is Ser-223. Glu-293 is a catalytic residue.

It belongs to the MurB family. It depends on FAD as a cofactor.

It is found in the cytoplasm. It catalyses the reaction UDP-N-acetyl-alpha-D-muramate + NADP(+) = UDP-N-acetyl-3-O-(1-carboxyvinyl)-alpha-D-glucosamine + NADPH + H(+). Its pathway is cell wall biogenesis; peptidoglycan biosynthesis. In terms of biological role, cell wall formation. This chain is UDP-N-acetylenolpyruvoylglucosamine reductase, found in Geobacter metallireducens (strain ATCC 53774 / DSM 7210 / GS-15).